The chain runs to 1749 residues: E3 ubiquitin-protein ligase UBR1 (1749 aa).

The residue at position 2 (A2) is an N-acetylalanine. The residue at position 21 (T21) is a Phosphothreonine. The UBR-type zinc-finger motif lies at 97–168 (QLCGRVFKSG…TGPFCVNHEP (72 aa)). C99, C112, C115, C124, C127, H133, and H136 together coordinate Zn(2+). Position 148 (F148) interacts with a peptide. C149 is a binding site for Zn(2+). D150 is a binding site for a peptide. Residue C151 participates in Zn(2+) binding. Position 153 (D153) interacts with a peptide. Residues C163 and H166 each coordinate Zn(2+). The segment at 842 to 868 (QHSKAEHMQKKRRKQENKDEALPPPPP) is disordered. Residues 1019 to 1054 (RKRKAEAARLHRQKIMAQMSALQKNFIETHKLMYDN) are UBC2-binding region (U2BR). Residues C1098, C1101, C1159, H1161, H1164, and C1167 each contribute to the Zn(2+) site. An RING-type; atypical zinc finger spans residues 1098 to 1201 (CILCQEEQEV…SGEYLCPLCK (104 aa)). Residue S1179 is modified to Phosphoserine. C1197, C1200, C1627, C1630, and C1653 together coordinate Zn(2+).

It belongs to the E3 ubiquitin-protein ligase UBR1-like family. Interacts with RECQL4. In terms of tissue distribution, broadly expressed, with highest levels in skeletal muscle, kidney and pancreas. Present in acinar cells of the pancreas (at protein level).

Its subcellular location is the cytoplasm. It localises to the cytosol. It carries out the reaction S-ubiquitinyl-[E2 ubiquitin-conjugating enzyme]-L-cysteine + [acceptor protein]-L-lysine = [E2 ubiquitin-conjugating enzyme]-L-cysteine + N(6)-ubiquitinyl-[acceptor protein]-L-lysine.. It functions in the pathway protein modification; protein ubiquitination. With respect to regulation, inhibited by the small-molecule compound RF-C11, which bears two heterovalent ligands: RF-C11 inhibits activity toward both type-1 and type-2 N-degrons. Its function is as follows. E3 ubiquitin-protein ligase which is a component of the N-end rule pathway. Recognizes and binds proteins bearing specific N-terminal residues that are destabilizing according to the N-end rule, leading to their ubiquitination and subsequent degradation. Recognizes both type-1 and type-2 N-degrons, containing positively charged amino acids (Arg, Lys and His) and bulky and hydrophobic amino acids, respectively. Does not ubiquitinate proteins that are acetylated at the N-terminus. In contrast, it strongly binds methylated N-degrons. Binds leucine and is a negative regulator of the leucine-mTOR signaling pathway, thereby controlling cell growth. The protein is E3 ubiquitin-protein ligase UBR1 of Homo sapiens (Human).